Consider the following 237-residue polypeptide: Ribose-5-phosphate isomerase A (237 aa).

Residues 33 to 36 (TGST), 90 to 93 (DGAD), and 103 to 106 (KGGG) contribute to the substrate site. The active-site Proton acceptor is the Glu112. Substrate is bound at residue Lys130.

This sequence belongs to the ribose 5-phosphate isomerase family. As to quaternary structure, homodimer.

The enzyme catalyses aldehydo-D-ribose 5-phosphate = D-ribulose 5-phosphate. Its pathway is carbohydrate degradation; pentose phosphate pathway; D-ribose 5-phosphate from D-ribulose 5-phosphate (non-oxidative stage): step 1/1. Functionally, catalyzes the reversible conversion of ribose-5-phosphate to ribulose 5-phosphate. The chain is Ribose-5-phosphate isomerase A from Gloeothece citriformis (strain PCC 7424) (Cyanothece sp. (strain PCC 7424)).